Reading from the N-terminus, the 415-residue chain is Phosphoglycerate kinase (415 aa).

Substrate contacts are provided by residues 24 to 26 (DLN), Arg-39, 62 to 65 (HLGR), Arg-121, and Arg-161. ATP contacts are provided by residues Lys-211, Gly-307, Glu-338, and 367–370 (GGDS).

The protein belongs to the phosphoglycerate kinase family. Monomer.

It is found in the cytoplasm. The enzyme catalyses (2R)-3-phosphoglycerate + ATP = (2R)-3-phospho-glyceroyl phosphate + ADP. It functions in the pathway carbohydrate degradation; glycolysis; pyruvate from D-glyceraldehyde 3-phosphate: step 2/5. The chain is Phosphoglycerate kinase from Micrococcus luteus (strain ATCC 4698 / DSM 20030 / JCM 1464 / CCM 169 / CCUG 5858 / IAM 1056 / NBRC 3333 / NCIMB 9278 / NCTC 2665 / VKM Ac-2230) (Micrococcus lysodeikticus).